The following is a 1216-amino-acid chain: MSQAGDVEGPSTGDPVLSPQHNCELLQNMEGASSMPGLSPDGPGASSGPGVRAGSRRKIPRKEALRGGSSRAAGAAEVRPGVLELLAVVQSRGSMLAPGLHMQLPSVPTQGRALTSKRLQVSLCDILDDSCPRKLCSRSAGLPERALACRERLAGVEEVSCLRPREARDGGMSSPGCDRRSPTLSKEEPPGRPLTSSPDPVPVRVRKKWRRQGAHSECEEGAGDFLWLDQSPRGDNLLSVGDPPQVADLESLGGPCRPPSPKDTGSGPGEPGGSGAGCASGTEKFGYLPATGDGPQPGSPCGPVGFPVPSGGESLSSAAQAPPQSAALCLGASAQASAEQQEAVCVVRTGSDEGQAPAQDQEELEAKAQPASRGRLEQGLAAPADTCASSREPLGGLSSSLDTEASRACSGPFMEQRRSKGTKNLKKGPVPCAQDRGTDRSSDNSHQDRPEEPSPGGCPRLEEVKIPHGVKLVCYLGSGPVIQLLGAISHGQAGGQLPPKLEVLEDLMEVSSPSPAQRLRRKKRPMVQGPAGCQVFQPSPSGGTAGDPGGLSDPFYPPRSGSLALGDPSSDPACSQSGPMEAEEDSLPEQPEDSAQLQQEKPSLYIGVRGTVVRSMQEVLWTRLRELPDPVLSEEVVEGIAAGIEAALWDLTQGTNGRYKTKYRSLLFNLRDPRNLDLFLKVVHGDVTPYDLVRMSSMQLAPQELARWRDQEEKRGLNIIEQQQKEPCRLPASKMTHKGEVEIQRDMDQTLTLEDLVGPQMFMDCSPQALPIASEDTTGQHDHHFLDPNCHICKDWEPSNELLGSFEAAKSCGDNIFQKALSQTPMPAPEMPKTRELSPTEPQDRVPPSGLHVPAAPTKALPCLPPWEGVLDMFSIKRFRARAQLVSGHSCRLVQALPTVIRSAGCIPSNIVWDLLASICPAKAKDVCVVRLCPHGARDTQNCRLLYSYLNDRQRHGLASVEHMGMVLLPLPAFQPLPTRLRPLGGPGLWALPVSPLLSPGLEVTHSSLLLAVLLPKEGLPDTAGSSPWLGKVQKMVSFNSKVEKRYYQPDDRRPNVPLKGTPPPGGAWQQSQGRGSIAPRGISAWQRPPRGRGRLWPEPENWQHPGRGQWPPEPGLRQSQHPYSVAPAGHGFGRGQHFHRDSCPHQALLRHLESLATMSHQLQALLCPQTKSSIPRPLQRLSSALAAPEPPGPARDSSLGPTDEAGSECPFPRKA.

5 disordered regions span residues 1 to 74 (MSQA…RAAG), 166 to 216 (EARD…GAHS), 236 to 325 (NLLS…PPQS), 348 to 462 (RTGS…PRLE), and 511 to 601 (SSPS…QQEK). Over residues 36–50 (PGLSPDGPGASSGPG) the composition is skewed to low complexity. Residues 177–190 (CDRRSPTLSKEEPP) show a composition bias toward basic and acidic residues. Residues 204–213 (RVRKKWRRQG) show a composition bias toward basic residues. Residues 266 to 278 (SGPGEPGGSGAGC) are compositionally biased toward gly residues. Residues 314 to 325 (SLSSAAQAPPQS) show a composition bias toward low complexity. Residues 436-452 (RGTDRSSDNSHQDRPEE) show a composition bias toward basic and acidic residues. Positions 581–592 (EAEEDSLPEQPE) are enriched in acidic residues. In terms of domain architecture, TFIIS central spans 608 to 728 (VRGTVVRSMQ…IIEQQQKEPC (121 aa)). Residues 823–850 (QTPMPAPEMPKTRELSPTEPQDRVPPSG) form a disordered region. Residues 832–844 (PKTRELSPTEPQD) are compositionally biased toward basic and acidic residues. The region spanning 867 to 970 (WEGVLDMFSI…VEHMGMVLLP (104 aa)) is the SPOC domain. Residues 1046-1055 (RYYQPDDRRP) are compositionally biased toward basic and acidic residues. Disordered regions lie at residues 1046–1140 (RYYQ…QHFH) and 1176–1216 (PRPL…PRKA).

Interacts with DNMT3A, DNMT3C and DNMT3L. Interacts with C19orf84. Interacts with SPIN1; promoting recruitment to transposons marked with histone H3 trimethylated at both 'Lys-4' and 'Lys-9' (H3K4me3K9me3).

It localises to the nucleus. The protein resides in the chromosome. Its function is as follows. Protein adapter that acts as an essential executor of PIWIL4-piRNA pathway directed transposon DNA methylation and silencing in the male embryonic germ cells. Recruited to young transposons, which are specifically marked with histone H3 trimethylated at both 'Lys-4' and 'Lys-9' (H3K4me3K9me3), via its association with SPIN1 chromatin reader, and associates with the de novo DNA methylation machinery and repressive chromatin remodeling complexes. Following this, PIWIL4 engages with nascent transposable element transcript to direct piRNA-directed DNA methylation. Not required for piRNA biosynthesis. The protein is SPOC domain-containing protein 1 of Homo sapiens (Human).